A 430-amino-acid chain; its full sequence is Ribosomal protein uS12 methylthiotransferase RimO (430 aa).

The region spanning 1–116 (MKIGIKVLGC…IAEAIEKATP (116 aa)) is the MTTase N-terminal domain. 6 residues coordinate [4Fe-4S] cluster: C10, C46, C79, C146, C150, and C153. The Radical SAM core domain occupies 132–362 (SCNNSFAYVK…LIFQSQIAYE (231 aa)). Positions 365–430 (KRFVGKNLNV…DEYDLKGELI (66 aa)) constitute a TRAM domain.

This sequence belongs to the methylthiotransferase family. RimO subfamily. The cofactor is [4Fe-4S] cluster.

It is found in the cytoplasm. The catalysed reaction is L-aspartate(89)-[ribosomal protein uS12]-hydrogen + (sulfur carrier)-SH + AH2 + 2 S-adenosyl-L-methionine = 3-methylsulfanyl-L-aspartate(89)-[ribosomal protein uS12]-hydrogen + (sulfur carrier)-H + 5'-deoxyadenosine + L-methionine + A + S-adenosyl-L-homocysteine + 2 H(+). Functionally, catalyzes the methylthiolation of an aspartic acid residue of ribosomal protein uS12. The sequence is that of Ribosomal protein uS12 methylthiotransferase RimO from Pseudothermotoga lettingae (strain ATCC BAA-301 / DSM 14385 / NBRC 107922 / TMO) (Thermotoga lettingae).